Reading from the N-terminus, the 410-residue chain is 2-oxoglutarate-dependent dioxygenase AOP3 (410 aa).

In terms of domain architecture, Fe2OG dioxygenase spans 258 to 355 (GNASVGAKEA…RYAAALFSNP (98 aa)). The Fe cation site is built by His278, Asp280, and His335. 2-oxoglutarate is bound at residue Arg346.

Belongs to the iron/ascorbate-dependent oxidoreductase family. It depends on Fe(2+) as a cofactor.

Functionally, 2-oxoglutarate-dependent dioxygenase involved in glucosinolates biosynthesis. Catalyzes the conversion of methylsulfinylalkyl glucosinolates to hydroxyalkyl glucosinolates. The polypeptide is 2-oxoglutarate-dependent dioxygenase AOP3 (AOP3) (Arabidopsis thaliana (Mouse-ear cress)).